Consider the following 155-residue polypeptide: Perlucin (155 aa).

3 disulfide bridges follow: Cys2/Cys13, Cys30/Cys127, and Cys102/Cys119. In terms of domain architecture, C-type lectin spans Asn9–Glu128. The N-linked (GlcNAc...) asparagine glycan is linked to Asn84. 2 tandem repeats follow at residues Asn136–Arg145 and Asp146–Arg155.

Post-translationally, glycosylated.

Functionally, may promote nucleation and/or growth of calcium carbonate crystals. Binds to D-galactose and D-mannose/D-glucose. The polypeptide is Perlucin (Haliotis laevigata (Smooth Australian abalone)).